The following is a 190-amino-acid chain: Photosynthetic NDH subunit of lumenal location 2, chloroplastic (190 aa).

A chloroplast-targeting transit peptide spans 1–31; sequence MSSFTTTNTPPPYLLRKIYHRRVNQPFSVVC. Residues 32–68 constitute a thylakoid transit peptide; sequence CTGEPQQDIFTRRRTLTSLITFTVIGGATSSALAQEK. Coiled-coil stretches lie at residues 87 to 107 and 139 to 159; these read EDAAARIKQTAEGLRDMREML and ESRRNDYVQAANELVENMSEL.

The protein belongs to the PsbQ family. As to quaternary structure, part of the chloroplast NDH complex, composed of a mixture of chloroplast and nucleus encoded subunits. Component of the NDH lumenal subcomplex, at least composed of PnsL1, PnsL2, PnsL3, PnsL4 and PnsL5.

It is found in the plastid. The protein localises to the chloroplast thylakoid membrane. Functionally, NDH shuttles electrons from NAD(P)H:plastoquinone, via FMN and iron-sulfur (Fe-S) centers, to quinones in the photosynthetic chain and possibly in a chloroplast respiratory chain. The immediate electron acceptor for the enzyme in this species is believed to be plastoquinone. Couples the redox reaction to proton translocation, and thus conserves the redox energy in a proton gradient. Required for both formation and activity of the chloroplast NAD(P)H dehydrogenase (NDH) complex. The sequence is that of Photosynthetic NDH subunit of lumenal location 2, chloroplastic from Arabidopsis thaliana (Mouse-ear cress).